The following is a 420-amino-acid chain: RING finger protein 39 (420 aa).

Residues 88–135 form an RING-type zinc finger; sequence CPLCGGSFEDPVLLACEHSFCRACLARRWGTPPATGTEASPTACPCCG. A B30.2/SPRY domain is found at 210–420; that stretch reads DDLPEDYPVV…APLRIVPAES (211 aa).

Expressed in testis.

The protein localises to the cytoplasm. The enzyme catalyses S-ubiquitinyl-[E2 ubiquitin-conjugating enzyme]-L-cysteine + [acceptor protein]-L-lysine = [E2 ubiquitin-conjugating enzyme]-L-cysteine + N(6)-ubiquitinyl-[acceptor protein]-L-lysine.. It participates in protein modification; protein ubiquitination. Its function is as follows. Plays an inhibitory role in anti-RNA viral innate immunity by targeting the adapter DDX3X and promoting its 'Lys-48'-linked polyubiquitination. Alternatively, enhances the cGAS-STING pathway activation by promoting 'Lys-63'-linked ubiquitination of STING1, facilitating the STING1-TBK1 complex formation and STING1 activation. (Microbial infection) Plays a positive role in human immunodeficiency virus (HIV-1) replication. This is RING finger protein 39 (RNF39) from Homo sapiens (Human).